The chain runs to 429 residues: Histidine--tRNA ligase (429 aa).

It belongs to the class-II aminoacyl-tRNA synthetase family. As to quaternary structure, homodimer.

The protein localises to the cytoplasm. The enzyme catalyses tRNA(His) + L-histidine + ATP = L-histidyl-tRNA(His) + AMP + diphosphate + H(+). The polypeptide is Histidine--tRNA ligase (Prochlorococcus marinus (strain MIT 9515)).